The primary structure comprises 130 residues: Holo-[acyl-carrier-protein] synthase (130 aa).

Mg(2+)-binding residues include D8 and E62.

It belongs to the P-Pant transferase superfamily. AcpS family. Mg(2+) serves as cofactor.

The protein localises to the cytoplasm. It catalyses the reaction apo-[ACP] + CoA = holo-[ACP] + adenosine 3',5'-bisphosphate + H(+). Transfers the 4'-phosphopantetheine moiety from coenzyme A to a Ser of acyl-carrier-protein. The polypeptide is Holo-[acyl-carrier-protein] synthase (Herminiimonas arsenicoxydans).